The sequence spans 143 residues: Large ribosomal subunit protein uL16 (143 aa).

The tract at residues 1–26 is disordered; the sequence is MSMALLPRRVKYRKSQRGSRKGNATR. Residues 8–20 are compositionally biased toward basic residues; the sequence is RRVKYRKSQRGSR.

The protein belongs to the universal ribosomal protein uL16 family. As to quaternary structure, part of the 50S ribosomal subunit.

In terms of biological role, binds 23S rRNA and is also seen to make contacts with the A and possibly P site tRNAs. The sequence is that of Large ribosomal subunit protein uL16 from Methylacidiphilum infernorum (isolate V4) (Methylokorus infernorum (strain V4)).